The chain runs to 429 residues: Serine hydroxymethyltransferase (429 aa).

(6S)-5,6,7,8-tetrahydrofolate contacts are provided by residues Leu126 and 130–132; that span reads GHL. Lys235 carries the post-translational modification N6-(pyridoxal phosphate)lysine.

It belongs to the SHMT family. In terms of assembly, homodimer. The cofactor is pyridoxal 5'-phosphate.

The protein localises to the cytoplasm. It catalyses the reaction (6R)-5,10-methylene-5,6,7,8-tetrahydrofolate + glycine + H2O = (6S)-5,6,7,8-tetrahydrofolate + L-serine. It participates in one-carbon metabolism; tetrahydrofolate interconversion. Its pathway is amino-acid biosynthesis; glycine biosynthesis; glycine from L-serine: step 1/1. Catalyzes the reversible interconversion of serine and glycine with tetrahydrofolate (THF) serving as the one-carbon carrier. This reaction serves as the major source of one-carbon groups required for the biosynthesis of purines, thymidylate, methionine, and other important biomolecules. Also exhibits THF-independent aldolase activity toward beta-hydroxyamino acids, producing glycine and aldehydes, via a retro-aldol mechanism. In Zymomonas mobilis subsp. mobilis (strain ATCC 31821 / ZM4 / CP4), this protein is Serine hydroxymethyltransferase.